A 402-amino-acid polypeptide reads, in one-letter code: Exodeoxyribonuclease 7 large subunit (402 aa).

It belongs to the XseA family. In terms of assembly, heterooligomer composed of large and small subunits.

The protein resides in the cytoplasm. The enzyme catalyses Exonucleolytic cleavage in either 5'- to 3'- or 3'- to 5'-direction to yield nucleoside 5'-phosphates.. Functionally, bidirectionally degrades single-stranded DNA into large acid-insoluble oligonucleotides, which are then degraded further into small acid-soluble oligonucleotides. In Streptomyces coelicolor (strain ATCC BAA-471 / A3(2) / M145), this protein is Exodeoxyribonuclease 7 large subunit.